The sequence spans 495 residues: Neuronal acetylcholine receptor subunit alpha-3 (495 aa).

Positions 1–21 are cleaved as a signal peptide; that stretch reads MARRSRLRRLLLLLLLPVAST. Topologically, residues 22–240 are extracellular; it reads SDAEHRLFER…PLFYTINLII (219 aa). Residues asparagine 45 and asparagine 162 are each glycosylated (N-linked (GlcNAc...) asparagine). Intrachain disulfides connect cysteine 149–cysteine 163 and cysteine 213–cysteine 214. Residues 241-256 traverse the membrane as a helical segment; that stretch reads PCLLISFLTVLVFYLP. The Cytoplasmic segment spans residues 257–258; sequence SD. A helical membrane pass occupies residues 259–275; it reads CGEKVTLCISVLLSLTV. Glutamate 261 lines the Na(+) pocket. Topologically, residues 276-297 are extracellular; the sequence is FLLVITETIPSTSLVIPLIGEY. Residues 298-316 traverse the membrane as a helical segment; the sequence is LLFTMIFVTLSIVITVFVL. Residues 317 to 464 lie on the Cytoplasmic side of the membrane; it reads NVHYRTPTTH…QDDWKYVAMV (148 aa). 2 positions are modified to phosphoserine: serine 403 and serine 406. A helical transmembrane segment spans residues 465–483; the sequence is IDRIFLWVFILVCILGTAG. The Extracellular portion of the chain corresponds to 484 to 495; sequence LFLQPLMTRDDA.

It belongs to the ligand-gated ion channel (TC 1.A.9) family. Acetylcholine receptor (TC 1.A.9.1) subfamily. Alpha-3/CHRNA3 sub-subfamily. As to quaternary structure, neuronal AChR is composed of two different types of subunits: alpha and beta. CHRNA3/Alpha-3 subunit can be combined to CHRNB2/beta-2 or CHRNB4/beta-4 to give rise to functional receptors. Part of a complex composed of STUB1/CHIP, VCP/p97, CHRNA3, and UBXN2A that modulates the ubiquitination and endoplasmic reticulum-associated degradation (ERAD) of CHRNA3. Within the complex UBXN2A acts as a scaffold protein required for the interaction of CHRNA3 with VCP/p97, this interaction also inhibits CHRNA3 ubiquitination by STUB1/CHIP and subsequently ERAD. Interacts with UBXN2A (via SEP domain), the interaction is required for the interaction of CHRNA3 in the STUB1:VCP:UBXN2A complex. Interacts with RIC3; which is required for proper folding and assembly. Interacts with LYPD6. In terms of processing, ubiquitinated; by STUB1/CHIP and thereafter degraded by the 26S proteosome complex.

The protein localises to the synaptic cell membrane. It localises to the cell membrane. It is found in the endoplasmic reticulum. Its subcellular location is the golgi apparatus. The enzyme catalyses K(+)(in) = K(+)(out). The catalysed reaction is Na(+)(in) = Na(+)(out). It carries out the reaction Ca(2+)(in) = Ca(2+)(out). With respect to regulation, activated by a myriad of ligands such as acetylcholine, cytisine, nicotine, choline and epibatidine. The heteropentamer CHRNA3:CHRNB2 activity is blocked by alpha-conotoxins ImI, ImII, PnIA, GID and MII. The heteropentamer CHRNA3:CHRNB4 activity is blocked by the alpha-conotoxin ImI and AuIB. In terms of biological role, component of neuronal acetylcholine receptors (nAChRs) that function as pentameric, ligand-gated cation channels with high calcium permeability among other activities. nAChRs are excitatory neurotrasnmitter receptors formed by a collection of nAChR subunits known to mediate synaptic transmission in the nervous system and the neuromuscular junction. Each nAchR subunit confers differential attributes to channel properties, including activation, deactivation and desensitization kinetics, pH sensitivity, cation permeability, and binding to allosteric modulators. CHRNA3 forms heteropentameric neuronal acetylcholine receptors with CHRNB2 and CHRNB4. CHRNA3:CHRNB4 being predominant in neurons of the autonomic ganglia, it is known as ganglionic nicotinic receptor. CHRNA3:CHRNB4 also plays an important role in the habenulo-interpeduncular tract, modulating the mesolimbic dopamine system and affecting reward circuits and addiction. Hypothalamic CHRNA3:CHRNB4 nAChR activation by nicotine leads to activation of POMC neurons and a decrease in food intake. Also expressed in the urothelium where it modulates reflex bladder activity by increasing intracellular calcium through extracellular influx and basal ATP release. In Bos taurus (Bovine), this protein is Neuronal acetylcholine receptor subunit alpha-3 (CHRNA3).